Reading from the N-terminus, the 119-residue chain is MPSKQYRVDRLAQEIQKDVDEILLKRVRDPRVQNVTITGVDVTGDLQQATIYYSILSDLASDAEKAQAGLDKATGLIRSELGARLNIFKTPEIKFVRDPSVAYGSRIDQLINDLHKKEK.

Belongs to the RbfA family. As to quaternary structure, monomer. Binds 30S ribosomal subunits, but not 50S ribosomal subunits or 70S ribosomes.

The protein resides in the cytoplasm. Its function is as follows. One of several proteins that assist in the late maturation steps of the functional core of the 30S ribosomal subunit. Associates with free 30S ribosomal subunits (but not with 30S subunits that are part of 70S ribosomes or polysomes). Required for efficient processing of 16S rRNA. May interact with the 5'-terminal helix region of 16S rRNA. In Limosilactobacillus reuteri (strain DSM 20016) (Lactobacillus reuteri), this protein is Ribosome-binding factor A.